A 495-amino-acid chain; its full sequence is tRNA (guanine-N(7)-)-methyltransferase non-catalytic subunit trm82 (495 aa).

Residues 51–100 form a disordered region; sequence ANTAEAKAAPSTTGEEPPEKRRKVSPPPDQKPEDSEPASQKSRKPEASPA. WD repeat units lie at residues 99–139, 245–290, and 295–337; these read PAWS…ALKQ, SMLT…HIIE, and GHTS…QKVP.

Belongs to the WD repeat TRM82 family. As to quaternary structure, forms a heterodimer with the catalytic subunit trm8.

It is found in the nucleus. The protein operates within tRNA modification; N(7)-methylguanine-tRNA biosynthesis. Functionally, required for the formation of N(7)-methylguanine at position 46 (m7G46) in tRNA. In the complex, it is required to stabilize and induce conformational changes of the catalytic subunit. This Aspergillus clavatus (strain ATCC 1007 / CBS 513.65 / DSM 816 / NCTC 3887 / NRRL 1 / QM 1276 / 107) protein is tRNA (guanine-N(7)-)-methyltransferase non-catalytic subunit trm82 (trm82).